Here is a 172-residue protein sequence, read N- to C-terminus: Shikimate kinase (172 aa).

14–19 (GAGKST) serves as a coordination point for ATP. Serine 18 provides a ligand contact to Mg(2+). Positions 36, 60, and 82 each coordinate substrate. Arginine 120 is a binding site for ATP. Position 140 (arginine 140) interacts with substrate. Glutamine 157 contributes to the ATP binding site.

The protein belongs to the shikimate kinase family. Monomer. Mg(2+) serves as cofactor.

It is found in the cytoplasm. The catalysed reaction is shikimate + ATP = 3-phosphoshikimate + ADP + H(+). Its pathway is metabolic intermediate biosynthesis; chorismate biosynthesis; chorismate from D-erythrose 4-phosphate and phosphoenolpyruvate: step 5/7. Functionally, catalyzes the specific phosphorylation of the 3-hydroxyl group of shikimic acid using ATP as a cosubstrate. The polypeptide is Shikimate kinase (Aeromonas salmonicida (strain A449)).